The chain runs to 214 residues: Thiamine-phosphate synthase (214 aa).

4-amino-2-methyl-5-(diphosphooxymethyl)pyrimidine is bound by residues 37–41 (QLRDK) and asparagine 69. Positions 70 and 89 each coordinate Mg(2+). Residue serine 108 participates in 4-amino-2-methyl-5-(diphosphooxymethyl)pyrimidine binding. Position 134-136 (134-136 (TDS)) interacts with 2-[(2R,5Z)-2-carboxy-4-methylthiazol-5(2H)-ylidene]ethyl phosphate. Position 137 (lysine 137) interacts with 4-amino-2-methyl-5-(diphosphooxymethyl)pyrimidine. 2-[(2R,5Z)-2-carboxy-4-methylthiazol-5(2H)-ylidene]ethyl phosphate contacts are provided by residues glycine 167 and 187–188 (IS).

This sequence belongs to the thiamine-phosphate synthase family. Mg(2+) is required as a cofactor.

The catalysed reaction is 2-[(2R,5Z)-2-carboxy-4-methylthiazol-5(2H)-ylidene]ethyl phosphate + 4-amino-2-methyl-5-(diphosphooxymethyl)pyrimidine + 2 H(+) = thiamine phosphate + CO2 + diphosphate. It carries out the reaction 2-(2-carboxy-4-methylthiazol-5-yl)ethyl phosphate + 4-amino-2-methyl-5-(diphosphooxymethyl)pyrimidine + 2 H(+) = thiamine phosphate + CO2 + diphosphate. It catalyses the reaction 4-methyl-5-(2-phosphooxyethyl)-thiazole + 4-amino-2-methyl-5-(diphosphooxymethyl)pyrimidine + H(+) = thiamine phosphate + diphosphate. Its pathway is cofactor biosynthesis; thiamine diphosphate biosynthesis; thiamine phosphate from 4-amino-2-methyl-5-diphosphomethylpyrimidine and 4-methyl-5-(2-phosphoethyl)-thiazole: step 1/1. Its function is as follows. Condenses 4-methyl-5-(beta-hydroxyethyl)thiazole monophosphate (THZ-P) and 2-methyl-4-amino-5-hydroxymethyl pyrimidine pyrophosphate (HMP-PP) to form thiamine monophosphate (TMP). The sequence is that of Thiamine-phosphate synthase from Natronomonas pharaonis (strain ATCC 35678 / DSM 2160 / CIP 103997 / JCM 8858 / NBRC 14720 / NCIMB 2260 / Gabara) (Halobacterium pharaonis).